The sequence spans 150 residues: MKIYADADALPTPIKDILCRAAMRRGIALVLVANKALRFPESPHITAVRVGQGFDVVDGVIVERVAPGDLVITADIPLAAQVVEKDAHALNPRGERYTRDNILGKLAMRGLLSELRDSGVVTGGPPPLSNRDREAFANQLDQFLRQYTGN.

Belongs to the UPF0178 family.

The sequence is that of UPF0178 protein DMR_20710 from Solidesulfovibrio magneticus (strain ATCC 700980 / DSM 13731 / RS-1) (Desulfovibrio magneticus).